The following is a 279-amino-acid chain: Esterase CG5412 (279 aa).

Active-site charge relay system residues include Ser133, Asp191, and His218. A disordered region spans residues 249–279 (QSGNASFVDSGAEDDNDAEVAAMTAELDESD).

Belongs to the LovG family.

This Drosophila melanogaster (Fruit fly) protein is Esterase CG5412.